Consider the following 120-residue polypeptide: Large ribosomal subunit protein bL21 (120 aa).

Belongs to the bacterial ribosomal protein bL21 family. In terms of assembly, part of the 50S ribosomal subunit. Contacts protein L20.

Functionally, this protein binds to 23S rRNA in the presence of protein L20. This chain is Large ribosomal subunit protein bL21, found in Rhizorhabdus wittichii (strain DSM 6014 / CCUG 31198 / JCM 15750 / NBRC 105917 / EY 4224 / RW1) (Sphingomonas wittichii).